Reading from the N-terminus, the 348-residue chain is Flagellar P-ring protein (348 aa).

An N-terminal signal peptide occupies residues 1–16; that stretch reads MRVLTIFLLFMTSIFA.

It belongs to the FlgI family. As to quaternary structure, the basal body constitutes a major portion of the flagellar organelle and consists of four rings (L,P,S, and M) mounted on a central rod.

Its subcellular location is the periplasm. It localises to the bacterial flagellum basal body. In terms of biological role, assembles around the rod to form the L-ring and probably protects the motor/basal body from shearing forces during rotation. This Campylobacter jejuni subsp. jejuni serotype O:23/36 (strain 81-176) protein is Flagellar P-ring protein.